The sequence spans 254 residues: Hydroxyethylthiazole kinase (254 aa).

Substrate is bound at residue M40. Positions 116 and 162 each coordinate ATP. G189 serves as a coordination point for substrate.

The protein belongs to the Thz kinase family. Requires Mg(2+) as cofactor.

The catalysed reaction is 5-(2-hydroxyethyl)-4-methylthiazole + ATP = 4-methyl-5-(2-phosphooxyethyl)-thiazole + ADP + H(+). The protein operates within cofactor biosynthesis; thiamine diphosphate biosynthesis; 4-methyl-5-(2-phosphoethyl)-thiazole from 5-(2-hydroxyethyl)-4-methylthiazole: step 1/1. Functionally, catalyzes the phosphorylation of the hydroxyl group of 4-methyl-5-beta-hydroxyethylthiazole (THZ). In Limosilactobacillus fermentum (strain NBRC 3956 / LMG 18251) (Lactobacillus fermentum), this protein is Hydroxyethylthiazole kinase.